The sequence spans 262 residues: Flap endonuclease Xni (262 aa).

Asp-105 contacts Mg(2+). The region spanning 164–251 is the 5'-3' exonuclease domain; it reads SQFLDLMALA…NINLKDFRAN (88 aa). The K(+) site is built by Leu-172, Ala-173, Pro-181, Ile-183, and Ile-186. An interaction with DNA region spans residues 185-190; the sequence is GIGPKS.

This sequence belongs to the Xni family. Mg(2+) is required as a cofactor. K(+) serves as cofactor.

Its function is as follows. Has flap endonuclease activity. During DNA replication, flap endonucleases cleave the 5'-overhanging flap structure that is generated by displacement synthesis when DNA polymerase encounters the 5'-end of a downstream Okazaki fragment. The polypeptide is Flap endonuclease Xni (Shewanella sp. (strain W3-18-1)).